The sequence spans 232 residues: Ribose-5-phosphate isomerase A (232 aa).

Residues 31–34 (TGST), 87–90 (DGAD), and 100–103 (KGGG) contribute to the substrate site. Residue glutamate 109 is the Proton acceptor of the active site. Substrate is bound at residue lysine 127.

It belongs to the ribose 5-phosphate isomerase family. In terms of assembly, homodimer.

The enzyme catalyses aldehydo-D-ribose 5-phosphate = D-ribulose 5-phosphate. The protein operates within carbohydrate degradation; pentose phosphate pathway; D-ribose 5-phosphate from D-ribulose 5-phosphate (non-oxidative stage): step 1/1. In terms of biological role, catalyzes the reversible conversion of ribose-5-phosphate to ribulose 5-phosphate. The polypeptide is Ribose-5-phosphate isomerase A (Bifidobacterium longum (strain DJO10A)).